The following is a 104-amino-acid chain: Flagellar hook-basal body complex protein FliE (104 aa).

It belongs to the FliE family.

It localises to the bacterial flagellum basal body. The sequence is that of Flagellar hook-basal body complex protein FliE from Pectobacterium atrosepticum (strain SCRI 1043 / ATCC BAA-672) (Erwinia carotovora subsp. atroseptica).